The following is a 482-amino-acid chain: Exodeoxyribonuclease 7 large subunit (482 aa).

The tract at residues 457–482 is disordered; that stretch reads TLDTGGAPAKPASKPKQKPPEQGSLF.

This sequence belongs to the XseA family. As to quaternary structure, heterooligomer composed of large and small subunits.

It is found in the cytoplasm. The catalysed reaction is Exonucleolytic cleavage in either 5'- to 3'- or 3'- to 5'-direction to yield nucleoside 5'-phosphates.. Bidirectionally degrades single-stranded DNA into large acid-insoluble oligonucleotides, which are then degraded further into small acid-soluble oligonucleotides. The chain is Exodeoxyribonuclease 7 large subunit from Ruegeria pomeroyi (strain ATCC 700808 / DSM 15171 / DSS-3) (Silicibacter pomeroyi).